The chain runs to 132 residues: Small ribosomal subunit protein uS8 (132 aa).

The protein belongs to the universal ribosomal protein uS8 family. In terms of assembly, part of the 30S ribosomal subunit. Contacts proteins S5 and S12.

In terms of biological role, one of the primary rRNA binding proteins, it binds directly to 16S rRNA central domain where it helps coordinate assembly of the platform of the 30S subunit. The sequence is that of Small ribosomal subunit protein uS8 from Streptomyces coelicolor (strain ATCC BAA-471 / A3(2) / M145).